The following is a 498-amino-acid chain: TORTIFOLIA1-like protein 5 (498 aa).

HEAT repeat units follow at residues 56–93, 97–134, 136–173, 177–214, and 219–257; these read ETFS…SHGD, PHLS…NITG, PFSI…AADE, EQLQ…AVGG, and KAVL…VEEE. The disordered stretch occupies residues 296–423; sequence EGDSTEVSES…SSSQAKSNAE (128 aa). Residues 300–322 show a composition bias toward low complexity; that stretch reads TEVSESSSSSKSASSGLSATSGK. Residues 343 to 366 show a composition bias toward basic and acidic residues; sequence NDVEPLDRGDTPKDVEQEAVVSKE. Polar residues predominate over residues 390–400; it reads NGSNKSQVVQS. S426 carries the post-translational modification Phosphoserine.

This chain is TORTIFOLIA1-like protein 5, found in Arabidopsis thaliana (Mouse-ear cress).